The sequence spans 495 residues: Maternal protein exuperantia-1 (495 aa).

Disordered regions lie at residues 197–217 (DESANKENEPENVNRNGSSND) and 377–495 (TIKP…AATN). Composition is skewed to polar residues over residues 207-216 (ENVNRNGSSN) and 398-414 (AASSKNGAMSSRSTSTE).

Its function is as follows. Ensures the proper localization of the mRNA of the bicoid gene to the anterior regions of the oocyte thus playing a fundamental role in the establishment of the polarity of the oocyte. May bind the bcd mRNA. This chain is Maternal protein exuperantia-1 (exu1), found in Drosophila pseudoobscura pseudoobscura (Fruit fly).